Consider the following 490-residue polypeptide: MELSLESLGGLHGVTHAQAGELLSPGHARSAAAQHRSLVASGRPGLVAGMASLLDGGGAGGGGAGGAGAAGAAGGGPDFRGELAGPLHPAMGMACEAPGLGGTYTTLTPLQHLPPLAAVADKFHQHAVAGAHGGHPHAHPHPATAPPPPPPQRLAASVSGSFTLMRDERAALASVGHLYGPYGKELPTMGSPLSPLPSALPPALHSAPQPPPPPPLAAYGAPGHLAGDKLLPPAAFEPHAALLGRAEDALARGLPGGGGGAGGGGAAGGAAAGLLAPLGGLAAAGAHGPHSGGGGPGGGGGAGGGSGGPGAGAAAEEINTKEVAQRITAELKRYSIPQAIFAQRILCRSQGTLSDLLRNPKPWSKLKSGRETFRRMWKWLQEPEFQRMSALRLAACKRKEQDQQKERALQPKKQRLVFTDLQRRTLIAIFKENKRPSKEMQATISQQLGLELNTVSNFFMNARRRCMNRWAEEPGATPGTGTATATFSKA.

Disordered stretches follow at residues 130–155, 193–213, and 287–316; these read GAHG…QRLA, LSPL…PPPP, and HGPH…AAAE. The segment covering 143 to 152 has biased composition (pro residues); that stretch reads ATAPPPPPPQ. Residues 290–311 are compositionally biased toward gly residues; sequence HSGGGGPGGGGGAGGGSGGPGA. Positions 309-395 form a DNA-binding region, CUT; it reads PGAGAAAEEI…QRMSALRLAA (87 aa). The homeobox DNA-binding region spans 411-470; sequence PKKQRLVFTDLQRRTLIAIFKENKRPSKEMQATISQQLGLELNTVSNFFMNARRRCMNRW.

It belongs to the CUT homeobox family. As to expression, specifically expressed in brain, stomach and gut. Within the gut, expressed only in duodenum and jejunum.

It is found in the nucleus. Transcriptional activator. Binds the consensus DNA sequence 5'-DHWATTGAYTWWD-3' on a variety of gene promoters such as those of HNF3B and TTR. The sequence is that of One cut domain family member 3 (Onecut3) from Mus musculus (Mouse).